Here is a 92-residue protein sequence, read N- to C-terminus: Large ribosomal subunit protein bL28 (92 aa).

The interval 1–34 is disordered; it reads MGRECEITGKKTMFGNNVPRKGLSRKKGGGGQHI.

Belongs to the bacterial ribosomal protein bL28 family.

The sequence is that of Large ribosomal subunit protein bL28 from Borrelia turicatae (strain 91E135).